The sequence spans 87 residues: U3-theraphotoxin-Hhn1a 3 (87 aa).

The N-terminal stretch at 1–24 (MVNMKASMFLTFAGLVLLFVVCYA) is a signal peptide. Residues 25-52 (PESEEKEFPKEMLSSIFAVDNDFKQEER) constitute a propeptide that is removed on maturation. Cystine bridges form between Cys-54/Cys-67, Cys-61/Cys-72, and Cys-66/Cys-79.

It belongs to the neurotoxin 10 (Hwtx-1) family. 51 (Hntx-8) subfamily. Hntx-8 sub-subfamily. Expressed by the venom gland.

It localises to the secreted. Functionally, ion channel inhibitor. The sequence is that of U3-theraphotoxin-Hhn1a 3 from Cyriopagopus hainanus (Chinese bird spider).